Reading from the N-terminus, the 72-residue chain is Cell division protein ZapB (72 aa).

Residues 2–72 (SLEILDQLEG…RSLLGQIDNV (71 aa)) are a coiled coil. Residues 34–57 (NQQAQQANDELRSENEQLKGEHNN) are disordered. A compositionally biased stretch (basic and acidic residues) spans 42-57 (DELRSENEQLKGEHNN).

It belongs to the ZapB family. Homodimer. The ends of the coiled-coil dimer bind to each other, forming polymers. Interacts with FtsZ.

The protein resides in the cytoplasm. Functionally, non-essential, abundant cell division factor that is required for proper Z-ring formation. It is recruited early to the divisome by direct interaction with FtsZ, stimulating Z-ring assembly and thereby promoting cell division earlier in the cell cycle. Its recruitment to the Z-ring requires functional FtsA or ZipA. This is Cell division protein ZapB from Mannheimia succiniciproducens (strain KCTC 0769BP / MBEL55E).